The primary structure comprises 388 residues: Succinyl-diaminopimelate desuccinylase (388 aa).

Residue histidine 72 participates in Zn(2+) binding. Aspartate 74 is a catalytic residue. Aspartate 105 lines the Zn(2+) pocket. Catalysis depends on glutamate 139, which acts as the Proton acceptor. Positions 140, 168, and 353 each coordinate Zn(2+).

It belongs to the peptidase M20A family. DapE subfamily. Homodimer. Zn(2+) is required as a cofactor. The cofactor is Co(2+).

The catalysed reaction is N-succinyl-(2S,6S)-2,6-diaminopimelate + H2O = (2S,6S)-2,6-diaminopimelate + succinate. The protein operates within amino-acid biosynthesis; L-lysine biosynthesis via DAP pathway; LL-2,6-diaminopimelate from (S)-tetrahydrodipicolinate (succinylase route): step 3/3. Functionally, catalyzes the hydrolysis of N-succinyl-L,L-diaminopimelic acid (SDAP), forming succinate and LL-2,6-diaminopimelate (DAP), an intermediate involved in the bacterial biosynthesis of lysine and meso-diaminopimelic acid, an essential component of bacterial cell walls. This Orientia tsutsugamushi (strain Ikeda) (Rickettsia tsutsugamushi) protein is Succinyl-diaminopimelate desuccinylase.